We begin with the raw amino-acid sequence, 787 residues long: MKAAETRILELRAELDQHNYRYHVLDEPSIPDAEYDRLFHELKALEAENPHLVTPDSPTQRVGSAALSAFTQVRHEMAMLSLGNAFEENDLREFDRRVTEGLDLPAGDLFGEGGKVQYSCEPKLDGLAVSLLYRDGALVRGATRGDGTTGEDISVNVRTVRNIPLKLQGKGWPELLEVRGEVFMSKAGFERLNASQLEVGGKTFANPRNAAAGSLRQLDSKITANRPLEFCCYGLGQTSAEIADTHIGVLETLKKWGMPVSRELKLADGVEECLAYYRDIGERRLSLTYEIDGVVFKVNNLAAQRELGFRAREPRWAIAHKFPAMEELTELLDVEFQVGRTGAVTPVARLKPVKVAGVMVANATLHNMDEVARLGLMIGDTVIIRRAGDVIPQVVQVVVERRPETAKPVEVPQSCPVCGSHVERTQLIKRSKGKETVTEGAVYRCVGRLACGAQLKQAIIHYVSRRAMDIEGLGDKTIEQLVDEKLIGSPADLYKLKYEQIIDLEGFAEISSNKLLKAIADSRQPTLARFIYALGIPDVGEETAKVLARSLASLDRVKQALPEVLTYLPDVGLEVAYEIHSFFEDEHNRNVIDALLGECGLQLQDQGELGAEFAASTTLEGLIDKLHIPSVGPGAAQKLADRFGTLEAVISADWLDMRQTLPEKQAKSVRDFFDDNANAERARAIEAQLKDFGMHWRSEKKTVEGLPLAGQTWVLTGSLERMSRDVAKEKLESLGAKVSGSVSAKTHTVVAGPGAGSKLTKANELGLTVLDEEALLKRLTELGVAVD.

Residues 32–36 (DAEYD), 81–82 (SL), and Glu-121 contribute to the NAD(+) site. Residue Lys-123 is the N6-AMP-lysine intermediate of the active site. Arg-144, Glu-181, Lys-297, and Lys-321 together coordinate NAD(+). Residues Cys-415, Cys-418, Cys-445, and Cys-451 each contribute to the Zn(2+) site. Residues 703–787 (VEGLPLAGQT…RLTELGVAVD (85 aa)) form the BRCT domain.

It belongs to the NAD-dependent DNA ligase family. LigA subfamily. It depends on Mg(2+) as a cofactor. Mn(2+) is required as a cofactor.

It carries out the reaction NAD(+) + (deoxyribonucleotide)n-3'-hydroxyl + 5'-phospho-(deoxyribonucleotide)m = (deoxyribonucleotide)n+m + AMP + beta-nicotinamide D-nucleotide.. In terms of biological role, DNA ligase that catalyzes the formation of phosphodiester linkages between 5'-phosphoryl and 3'-hydroxyl groups in double-stranded DNA using NAD as a coenzyme and as the energy source for the reaction. It is essential for DNA replication and repair of damaged DNA. The chain is DNA ligase from Pseudomonas syringae pv. tomato (strain ATCC BAA-871 / DC3000).